A 335-amino-acid chain; its full sequence is tRNA-dihydrouridine(20/20a) synthase (335 aa).

FMN-binding positions include 19-21 and Q72; that span reads PMM. C102 acts as the Proton donor in catalysis. Residues K141, H173, 213–215, and 235–236 each bind FMN; these read NGG and GR.

Belongs to the Dus family. DusA subfamily. FMN is required as a cofactor.

The catalysed reaction is 5,6-dihydrouridine(20) in tRNA + NADP(+) = uridine(20) in tRNA + NADPH + H(+). The enzyme catalyses 5,6-dihydrouridine(20) in tRNA + NAD(+) = uridine(20) in tRNA + NADH + H(+). It catalyses the reaction 5,6-dihydrouridine(20a) in tRNA + NADP(+) = uridine(20a) in tRNA + NADPH + H(+). It carries out the reaction 5,6-dihydrouridine(20a) in tRNA + NAD(+) = uridine(20a) in tRNA + NADH + H(+). Catalyzes the synthesis of 5,6-dihydrouridine (D), a modified base found in the D-loop of most tRNAs, via the reduction of the C5-C6 double bond in target uridines. Specifically modifies U20 and U20a in tRNAs. The sequence is that of tRNA-dihydrouridine(20/20a) synthase from Xanthomonas campestris pv. campestris (strain ATCC 33913 / DSM 3586 / NCPPB 528 / LMG 568 / P 25).